Reading from the N-terminus, the 372-residue chain is MAESKRPRVFFDIQIGQQQTGRIAFELFNDVVPKTAENFRALCTGEKGMGKQGKPLHFKGSIFHRVIKQFMIQGGDFTAFNGTGGESIYGEKFPDENFELKHDRPFLLSMANSGPGTNGSQFFITTVPTPHLDGKHVVFGEVINGKSVVRKIENMPTQADKPTTDVTIAECGELTGEDYDNADKQTPDATGDPYEDFPDDHQGEELSAPVCFKIASELKNFGNTAFKNGNIALGLEKYQKGLRYLNEFPEPEENDPKDLEPQMKSLRFTLHSNSSLLANKLGQFKNGKTWATYALDVADAASAKDADRAKVYYRRAVAESGLKEEDEALKDLEQASTLAPSDAAIAAETARVKKAIKAREAQEKATARKFFS.

One can recognise a PPIase cyclophilin-type domain in the interval 10–173 (FFDIQIGQQQ…TDVTIAECGE (164 aa)). The tract at residues 174–193 (LTGEDYDNADKQTPDATGDP) is disordered. 3 TPR repeats span residues 215–248 (ASEL…LNEF), 268–304 (FTLH…ASAK), and 309–342 (AKVY…APSD).

Belongs to the cyclophilin-type PPIase family. PPIase D subfamily.

The protein resides in the cytoplasm. The enzyme catalyses [protein]-peptidylproline (omega=180) = [protein]-peptidylproline (omega=0). Its function is as follows. PPIases accelerate the folding of proteins. It catalyzes the cis-trans isomerization of proline imidic peptide bonds in oligopeptides. This Emericella nidulans (strain FGSC A4 / ATCC 38163 / CBS 112.46 / NRRL 194 / M139) (Aspergillus nidulans) protein is Peptidyl-prolyl cis-trans isomerase D (cpr6).